Consider the following 111-residue polypeptide: Large ribosomal subunit protein eL31 (111 aa).

It belongs to the eukaryotic ribosomal protein eL31 family.

In Encephalitozoon cuniculi (strain GB-M1) (Microsporidian parasite), this protein is Large ribosomal subunit protein eL31 (RPL31).